Reading from the N-terminus, the 264-residue chain is Glucosamine-6-phosphate deaminase (264 aa).

Catalysis depends on D67, which acts as the Proton acceptor; for enolization step. N136 functions as the For ring-opening step in the catalytic mechanism. Catalysis depends on H138, which acts as the Proton acceptor; for ring-opening step. E143 acts as the For ring-opening step in catalysis.

This sequence belongs to the glucosamine/galactosamine-6-phosphate isomerase family. NagB subfamily. Homohexamer.

The enzyme catalyses alpha-D-glucosamine 6-phosphate + H2O = beta-D-fructose 6-phosphate + NH4(+). It functions in the pathway amino-sugar metabolism; N-acetylneuraminate degradation; D-fructose 6-phosphate from N-acetylneuraminate: step 5/5. In terms of biological role, catalyzes the reversible isomerization-deamination of glucosamine 6-phosphate (GlcN6P) to form fructose 6-phosphate (Fru6P) and ammonium ion. The chain is Glucosamine-6-phosphate deaminase from Shewanella woodyi (strain ATCC 51908 / MS32).